The primary structure comprises 441 residues: MDMEVKTMPGKISIPRRFIFSEGKAIEHPDYPHYSNLLQKMNMPSVKGLEDRHNCVRFEKKCNPTFLKFHPYPPSVLPDYHLHYPYPPPYGRAYPLAPLRDDVPLGDPCSGFMSPGGDANLKPNIGRAIPNLVSFHDVKPQNRVPRPDKGFQTTIKRQTILAEELKQDRRWNSRKVPDISIKAKLGGWTSPMKVVPVPVHEHEVGTLSRIYTFDEEAISTDDSEPLVQLDKKYNIKDSFYKSSTQKAYEDVPWDKMLPPKLDPEETTVEKAADHISQCFSLKRYERLPAITQMVGGLWDRFQTRLFSAPAKPINFVSPSTRSKYIPLYTGHVQSTDADNVDNPYGDIKSVASPRHSKLQYTNSSRSANIPGYTGKVHFTATHPTNSNIPSREPSADSEMNRLLLQEMRVDRFRHQGPMSQMVTTVKPYNPFNKKEKETLEY.

Testis specific. Expressed at the spermatid stage.

Functionally, essential for normal spermatogenesis. In Mus musculus (Mouse), this protein is Protein SPMIP7 (Spmip7).